We begin with the raw amino-acid sequence, 521 residues long: Medium/long-chain-fatty-acid--[acyl-carrier-protein] ligase MbtM (521 aa).

It belongs to the ATP-dependent AMP-binding enzyme family.

It catalyses the reaction a long-chain fatty acid + holo-[ACP] + ATP = a long-chain fatty acyl-[ACP] + AMP + diphosphate. The enzyme catalyses a medium-chain fatty acid + holo-[ACP] + ATP = a medium-chain fatty acyl-[ACP] + AMP + diphosphate. The protein operates within siderophore biosynthesis; mycobactin biosynthesis. Activates lipidic moieties required for mycobactin biosynthesis. Converts medium- to long-chain aliphatic fatty acids into acyl adenylate, which is further transferred on to the phosphopantetheine arm of the carrier protein MbtL. In Mycobacterium bovis (strain ATCC BAA-935 / AF2122/97), this protein is Medium/long-chain-fatty-acid--[acyl-carrier-protein] ligase MbtM (mbtM).